Reading from the N-terminus, the 372-residue chain is Beta-1,4-galactosyltransferase 2 (372 aa).

The Cytoplasmic segment spans residues 1–15 (MSRLLGGTLERVCKA). Residues 16–36 (VLLLCLLHFLVAVILYFDVYA) traverse the membrane as a helical; Signal-anchor for type II membrane protein segment. Residues 37-372 (QHLAFFSRFS…GRPPSWPPRG (336 aa)) are Lumenal-facing. The segment at 56-97 (PAASSSSSSSNCSRPNATASSSGLPEVPSALPGPTAPTLPPC) is disordered. N-linked (GlcNAc...) asparagine glycans are attached at residues N66 and N71. Polar residues predominate over residues 66-78 (NCSRPNATASSSG). C97 and C139 are disulfide-bonded. Residues 150–154 (PFRHR), 189–191 (FNR), 217–218 (VD), and W278 contribute to the UDP-alpha-D-galactose site. The cysteines at positions 211 and 230 are disulfide-linked. D218 contributes to the Mn(2+) binding site. 280–283 (GEDD) serves as a coordination point for N-acetyl-D-glucosamine. H311 contributes to the Mn(2+) binding site. Residue 311-313 (HDR) participates in UDP-alpha-D-galactose binding. R323 lines the N-acetyl-D-glucosamine pocket. N-linked (GlcNAc...) asparagine glycosylation occurs at N357.

Belongs to the glycosyltransferase 7 family. Requires Mn(2+) as cofactor. In terms of tissue distribution, weakly expressed in various tissues. Highest expression in prostate, testis, ovary, intestine, muscle, and in fetal brain.

The protein resides in the golgi apparatus. The protein localises to the golgi stack membrane. The enzyme catalyses D-glucose + UDP-alpha-D-galactose = lactose + UDP + H(+). The catalysed reaction is an N-acetyl-beta-D-glucosaminyl derivative + UDP-alpha-D-galactose = a beta-D-galactosyl-(1-&gt;4)-N-acetyl-beta-D-glucosaminyl derivative + UDP + H(+). It carries out the reaction N-acetyl-D-glucosamine + UDP-alpha-D-galactose = beta-D-galactosyl-(1-&gt;4)-N-acetyl-D-glucosamine + UDP + H(+). The protein operates within protein modification; protein glycosylation. In terms of biological role, responsible for the synthesis of complex-type N-linked oligosaccharides in many glycoproteins as well as the carbohydrate moieties of glycolipids. Can produce lactose. The sequence is that of Beta-1,4-galactosyltransferase 2 from Homo sapiens (Human).